A 79-amino-acid chain; its full sequence is Small ribosomal subunit protein uS17 (79 aa).

Belongs to the universal ribosomal protein uS17 family. As to quaternary structure, part of the 30S ribosomal subunit.

One of the primary rRNA binding proteins, it binds specifically to the 5'-end of 16S ribosomal RNA. The chain is Small ribosomal subunit protein uS17 from Rhizobium rhizogenes (strain K84 / ATCC BAA-868) (Agrobacterium radiobacter).